A 547-amino-acid polypeptide reads, in one-letter code: Aspartate 1-decarboxylase (547 aa).

N6-(pyridoxal phosphate)lysine is present on Lys-338.

This sequence belongs to the group II decarboxylase family. Pyridoxal 5'-phosphate serves as cofactor.

It carries out the reaction L-aspartate + H(+) = beta-alanine + CO2. Its pathway is cofactor biosynthesis; (R)-pantothenate biosynthesis; beta-alanine from L-aspartate: step 1/1. Its function is as follows. Catalyzes the pyridoxal-dependent decarboxylation of aspartate to produce beta-alanine. Has weak activity with glutamate. The polypeptide is Aspartate 1-decarboxylase (Aliivibrio fischeri (strain ATCC 700601 / ES114) (Vibrio fischeri)).